Consider the following 215-residue polypeptide: Urease accessory protein UreF (215 aa).

This sequence belongs to the UreF family. In terms of assembly, ureD, UreF and UreG form a complex that acts as a GTP-hydrolysis-dependent molecular chaperone, activating the urease apoprotein by helping to assemble the nickel containing metallocenter of UreC. The UreE protein probably delivers the nickel.

It localises to the cytoplasm. Its function is as follows. Required for maturation of urease via the functional incorporation of the urease nickel metallocenter. The protein is Urease accessory protein UreF of Paracoccus denitrificans (strain Pd 1222).